Reading from the N-terminus, the 141-residue chain is Nucleoside diphosphate kinase (141 aa).

ATP is bound by residues Lys-9, Phe-57, Arg-85, Thr-91, Arg-102, and Asn-112. The Pros-phosphohistidine intermediate role is filled by His-115.

It belongs to the NDK family. Homotetramer. Requires Mg(2+) as cofactor.

It localises to the cytoplasm. It carries out the reaction a 2'-deoxyribonucleoside 5'-diphosphate + ATP = a 2'-deoxyribonucleoside 5'-triphosphate + ADP. The catalysed reaction is a ribonucleoside 5'-diphosphate + ATP = a ribonucleoside 5'-triphosphate + ADP. Functionally, major role in the synthesis of nucleoside triphosphates other than ATP. The ATP gamma phosphate is transferred to the NDP beta phosphate via a ping-pong mechanism, using a phosphorylated active-site intermediate. The chain is Nucleoside diphosphate kinase from Chlamydia caviae (strain ATCC VR-813 / DSM 19441 / 03DC25 / GPIC) (Chlamydophila caviae).